Here is a 76-residue protein sequence, read N- to C-terminus: Small ribosomal subunit protein bS18 (76 aa).

It belongs to the bacterial ribosomal protein bS18 family. Part of the 30S ribosomal subunit. Forms a tight heterodimer with protein bS6.

Functionally, binds as a heterodimer with protein bS6 to the central domain of the 16S rRNA, where it helps stabilize the platform of the 30S subunit. The protein is Small ribosomal subunit protein bS18 of Pseudomonas fluorescens (strain ATCC BAA-477 / NRRL B-23932 / Pf-5).